Reading from the N-terminus, the 348-residue chain is Dihydroorotase (348 aa).

Residues His-17 and His-19 each contribute to the Zn(2+) site. Substrate contacts are provided by residues 19–21 (HLR) and Asn-45. Residues Lys-103, His-140, and His-178 each contribute to the Zn(2+) site. At Lys-103 the chain carries N6-carboxylysine. His-140 is a binding site for substrate. Leu-223 contacts substrate. Asp-251 lines the Zn(2+) pocket. The active site involves Asp-251. Substrate-binding residues include His-255 and Ala-267.

This sequence belongs to the metallo-dependent hydrolases superfamily. DHOase family. Class II DHOase subfamily. Homodimer. It depends on Zn(2+) as a cofactor.

The catalysed reaction is (S)-dihydroorotate + H2O = N-carbamoyl-L-aspartate + H(+). The protein operates within pyrimidine metabolism; UMP biosynthesis via de novo pathway; (S)-dihydroorotate from bicarbonate: step 3/3. In terms of biological role, catalyzes the reversible cyclization of carbamoyl aspartate to dihydroorotate. This is Dihydroorotase from Salmonella paratyphi A (strain ATCC 9150 / SARB42).